The primary structure comprises 106 residues: UPF0145 protein APL_0465 (106 aa).

The protein belongs to the UPF0145 family.

The chain is UPF0145 protein APL_0465 from Actinobacillus pleuropneumoniae serotype 5b (strain L20).